A 673-amino-acid chain; its full sequence is Forkhead box protein O3 (673 aa).

A disordered region spans residues 1-153 (MAEAPASPAP…SGQPRKCSSR (153 aa)). Serine 30 is subject to Phosphoserine; by AMPK. At threonine 32 the chain carries Phosphothreonine; by PKB/AKT1. Residue lysine 46 is modified to N6-methyllysine. Residues 57-68 (IPEEEDDEDDED) are compositionally biased toward acidic residues. The segment covering 79-89 (IGGGGGSGTLG) has biased composition (gly residues). Residues 80 to 108 (GGGGGSGTLGSGLLLEDSARVLAPGGQDP) are required for mitochondrial import. N6-methyllysine is present on lysine 149. A DNA-binding region (fork-head) is located at residues 157-251 (WGNLSYADLI…KSGKAPRRRA (95 aa)). Threonine 179 carries the post-translational modification Phosphothreonine; by AMPK. Serine 209 bears the Phosphoserine; by STK4/MST1 mark. Phosphoserine; by MAPKAPK5 is present on serine 215. The residue at position 230 (lysine 230) is an N6-methyllysine. The tract at residues 231–302 (SSWWIINPDG…GSPTSRSSDE (72 aa)) is disordered. Lysine 242 bears the N6-acetyllysine mark. The Nuclear localization signal motif lies at 242–259 (KSGKAPRRRAVSMDNSNK). Phosphoserine; by PKB/AKT1 and MAPKAPK5 is present on serine 253. Basic residues predominate over residues 261–272 (TKSRGRAAKKKA). N6-methyllysine is present on residues lysine 262 and lysine 271. Residues serine 280 and serine 284 each carry the phosphoserine modification. A compositionally biased stretch (polar residues) spans 283–298 (DSPSQLSKWPGSPTSR). Lysine 290 carries the N6-methyllysine modification. A Phosphoserine modification is found at serine 294. Serine 299 carries the phosphoserine; by CaMK2A modification. The tract at residues 300-673 (SDELDAWTDF…QASSQSWVPG (374 aa)) is mediates interaction with CHUK/IKKA and IKBKB/IKKB. Serine 311 bears the Phosphoserine mark. Residue serine 315 is modified to Phosphoserine; by SGK1. Phosphoserine; by AMPK is present on residues serine 399 and serine 413. At lysine 419 the chain carries N6-methyllysine. Residue serine 421 is modified to Phosphoserine. The tract at residues 536 to 587 (HQHQTQGALGGSRALSNSVSNMGLSESSSLGSAKHQQQSPVSQSMQTLSDSL) is disordered. A compositionally biased stretch (polar residues) spans 549–582 (ALSNSVSNMGLSESSSLGSAKHQQQSPVSQSMQT). A Phosphoserine; by MAPKAPK5 modification is found at serine 551. Serine 555 is modified (phosphoserine; by AMPK and MAPKAPK5). Phosphoserine; by AMPK occurs at positions 588 and 626. Serine 644 bears the Phosphoserine; by IKKB mark.

Upon metabolic stress, forms a complex composed of FOXO3, SIRT3 and mitochondrial RNA polymerase POLRMT; the complex is recruited to mtDNA in a SIRT3-dependent manner. Also forms a complex composed of FOXO3, SIRT3, TFAM and POLRMT. Interacts with SIRT2; the interaction occurs independently of SIRT2 deacetylase activity. Interacts with YWHAB/14-3-3-beta and YWHAZ/14-3-3-zeta, which are required for cytosolic sequestration. Upon oxidative stress, interacts with STK4/MST1, which disrupts interaction with YWHAB/14-3-3-beta and leads to nuclear translocation. Interacts with PIM1. Interacts with DDIT3/CHOP. Interacts (deacetylated form) with SKP2. Interacts with CHUK and IKBKB. Interacts with CAMK2A, CAMK2B and calcineurin A. Interacts with NUPR1; this interaction represses FOXO3 transactivation. In terms of processing, in the presence of survival factors such as IGF1, phosphorylated on Thr-32 and Ser-253 by AKT1/PKB. This phosphorylated form then interacts with 14-3-3 proteins and is retained in the cytoplasm. Survival factor withdrawal induces dephosphorylation and promotes translocation to the nucleus where the dephosphorylated protein induces transcription of target genes and triggers apoptosis. Although AKT1/PKB doesn't appear to phosphorylate Ser-315 directly, it may activate other kinases that trigger phosphorylation at this residue. Phosphorylated by STK4/MST1 on Ser-209 upon oxidative stress, which leads to dissociation from YWHAB/14-3-3-beta and nuclear translocation. Phosphorylated by PIM1. Phosphorylation by AMPK leads to the activation of transcriptional activity without affecting subcellular localization. In response to metabolic stress, phosphorylated by AMPK on Ser-30 which mediates FOXO3 mitochondrial translocation. Phosphorylation by MAPKAPK5 promotes nuclear localization and DNA-binding, leading to induction of miR-34b and miR-34c expression, 2 post-transcriptional regulators of MYC that bind to the 3'UTR of MYC transcript and prevent its translation. Phosphorylated by CHUK/IKKA and IKBKB/IKKB. TNF-induced inactivation of FOXO3 requires its phosphorylation at Ser-644 by IKBKB/IKKB which promotes FOXO3 retention in the cytoplasm, polyubiquitination and ubiquitin-mediated proteasomal degradation. May be dephosphorylated by calcineurin A on Ser-299 which abolishes FOXO3 transcriptional activity. In cancer cells, ERK mediated-phosphorylation of Ser-12 is required for mitochondrial translocation of FOXO3 in response to metabolic stress or chemotherapeutic agents. Phosphorylation at Ser-253 promotes its degradation by the proteasome. Dephosphorylation at Ser-253 by protein phosphatase 2A (PPP2CA) promotes its stabilization; interaction with PPP2CA is enhanced by AMBRA1. Post-translationally, deacetylation by SIRT1 or SIRT2 stimulates interaction of FOXO3 with SKP2 and facilitates SCF(SKP2)-mediated FOXO3 ubiquitination and proteasomal degradation. Deacetylation by SIRT2 stimulates FOXO3-mediated transcriptional activity in response to oxidative stress. Deacetylated by SIRT3. Deacetylation by SIRT3 stimulates FOXO3-mediated mtDNA transcriptional activity in response to metabolic stress. Heavily methylated by SET9 which decreases stability, while moderately increasing transcriptional activity. The main methylation site is Lys-271. Methylation doesn't affect subcellular location. In terms of processing, polyubiquitinated. Ubiquitinated by a SCF complex containing SKP2, leading to proteasomal degradation. Post-translationally, the N-terminus is cleaved following import into the mitochondrion. As to expression, ubiquitous.

The protein resides in the cytoplasm. It localises to the cytosol. It is found in the nucleus. The protein localises to the mitochondrion matrix. Its subcellular location is the mitochondrion outer membrane. Its function is as follows. Transcriptional activator that recognizes and binds to the DNA sequence 5'-[AG]TAAA[TC]A-3' and regulates different processes, such as apoptosis and autophagy. Acts as a positive regulator of autophagy in skeletal muscle: in starved cells, enters the nucleus following dephosphorylation and binds the promoters of autophagy genes, such as GABARAP1L, MAP1LC3B and ATG12, thereby activating their expression, resulting in proteolysis of skeletal muscle proteins. Triggers apoptosis in the absence of survival factors, including neuronal cell death upon oxidative stress. Participates in post-transcriptional regulation of MYC: following phosphorylation by MAPKAPK5, promotes induction of miR-34b and miR-34c expression, 2 post-transcriptional regulators of MYC that bind to the 3'UTR of MYC transcript and prevent its translation. In response to metabolic stress, translocates into the mitochondria where it promotes mtDNA transcription. In response to metabolic stress, translocates into the mitochondria where it promotes mtDNA transcription. Also acts as a key regulator of chondrogenic commitment of skeletal progenitor cells in response to lipid availability: when lipids levels are low, translocates to the nucleus and promotes expression of SOX9, which induces chondrogenic commitment and suppresses fatty acid oxidation. Also acts as a key regulator of regulatory T-cells (Treg) differentiation by activating expression of FOXP3. This chain is Forkhead box protein O3, found in Homo sapiens (Human).